Reading from the N-terminus, the 201-residue chain is Probable nicotinate-nucleotide adenylyltransferase (201 aa).

It belongs to the NadD family.

The enzyme catalyses nicotinate beta-D-ribonucleotide + ATP + H(+) = deamido-NAD(+) + diphosphate. It functions in the pathway cofactor biosynthesis; NAD(+) biosynthesis; deamido-NAD(+) from nicotinate D-ribonucleotide: step 1/1. In terms of biological role, catalyzes the reversible adenylation of nicotinate mononucleotide (NaMN) to nicotinic acid adenine dinucleotide (NaAD). This is Probable nicotinate-nucleotide adenylyltransferase from Neisseria meningitidis serogroup C / serotype 2a (strain ATCC 700532 / DSM 15464 / FAM18).